Here is a 460-residue protein sequence, read N- to C-terminus: Exodeoxyribonuclease 7 large subunit (460 aa).

The segment at 438–460 is disordered; it reads ARVEKVNREEEKQSGSQKNGTRD. The span at 439–450 shows a compositional bias: basic and acidic residues; the sequence is RVEKVNREEEKQ. Residues 451–460 show a composition bias toward polar residues; the sequence is SGSQKNGTRD.

Belongs to the XseA family. In terms of assembly, heterooligomer composed of large and small subunits.

It localises to the cytoplasm. The catalysed reaction is Exonucleolytic cleavage in either 5'- to 3'- or 3'- to 5'-direction to yield nucleoside 5'-phosphates.. In terms of biological role, bidirectionally degrades single-stranded DNA into large acid-insoluble oligonucleotides, which are then degraded further into small acid-soluble oligonucleotides. The protein is Exodeoxyribonuclease 7 large subunit of Brevibacillus brevis (strain 47 / JCM 6285 / NBRC 100599).